The primary structure comprises 216 residues: MMRPEEIYQRIEAKNWRHVWVVGDIHGCFSMLMKRLRECRFDPQQDLLVSVGDLIDRGPDSLGCLALLRESWMTAVRGNHEQMALDARASSQSTLWLMNGGDWFTRLTAEHAAQAEALFILCQRLPWILEVRCRHSTHVIAHADYPASTYQWQKKVDLHQVLWSRERLINKRGGISGADHFWFGHTPLRRRMDFANVHYIDTGAVFGGQLTLARIQ.

The Mn(2+) site is built by Asp24, His26, Asp53, and Asn79. His80 (proton donor) is an active-site residue. His185 contributes to the Mn(2+) binding site.

The protein belongs to the PPP phosphatase family. PP-1 subfamily. Mn(2+) is required as a cofactor.

The catalysed reaction is O-phospho-L-seryl-[protein] + H2O = L-seryl-[protein] + phosphate. It carries out the reaction O-phospho-L-threonyl-[protein] + H2O = L-threonyl-[protein] + phosphate. With respect to regulation, inhibited by cadmium, copper, zinc when added cobalt when added concomitantly with manganese. In terms of biological role, can hydrolyze phosphorylated Ser-, Thr- or Tyr-substrates in vitro. The natural substrate is unknown. The protein is Serine/threonine-protein phosphatase 1 (pphA) of Salmonella typhimurium (strain LT2 / SGSC1412 / ATCC 700720).